A 522-amino-acid chain; its full sequence is Sensory neuron membrane protein 1 (522 aa).

Topologically, residues 1–11 (MQLAKPLKYAA) are cytoplasmic. Residues 12–32 (ISGIVAFVGLMFGWVIFPAIL) form a helical membrane-spanning segment. At 33–458 (KSQLKKEMAL…SQLFIPKRVV (426 aa)) the chain is on the extracellular side. N-linked (GlcNAc...) asparagine glycans are attached at residues N67, N105, and N229. 3 disulfide bridges follow: C268/C333, C297/C352, and C335/C341. The N-linked (GlcNAc...) asparagine glycan is linked to N440. Residues 459–479 (SVVCWCMISFGSLGVIAAVIF) form a helical membrane-spanning segment. The Cytoplasmic segment spans residues 480-522 (HFKGDIMHLAVAGDNSVSKIKPENDENKEVGVMGQNQEPAKVM). A disordered region spans residues 500–522 (KPENDENKEVGVMGQNQEPAKVM). Over residues 513–522 (GQNQEPAKVM) the composition is skewed to polar residues.

Belongs to the CD36 family. In terms of tissue distribution, principal component of the olfactory cilia membrane. Detected in both male and female antennae but not present in leg, abdomen, thorax or head.

The protein resides in the cell membrane. Functionally, plays an olfactory role that is not restricted to pheromone sensitivity. This is Sensory neuron membrane protein 1 from Bombyx mori (Silk moth).